The following is a 218-amino-acid chain: Hypoxanthine-guanine phosphoribosyltransferase (218 aa).

Residue A2 is modified to N-acetylalanine. K69 is a GMP binding site. Position 103 is an N6-acetyllysine (K103). K115 is covalently cross-linked (Glycyl lysine isopeptide (Lys-Gly) (interchain with G-Cter in SUMO1); alternate). A Glycyl lysine isopeptide (Lys-Gly) (interchain with G-Cter in SUMO2); alternate cross-link involves residue K115. Residues 134-142, K166, 186-188, and D194 contribute to the GMP site; these read EDIIDTGKT and KFV. Residue D138 is the Proton acceptor of the active site. T142 is subject to Phosphothreonine. A Mg(2+)-binding site is contributed by D194.

The protein belongs to the purine/pyrimidine phosphoribosyltransferase family. As to quaternary structure, homotetramer. Mg(2+) serves as cofactor.

It localises to the cytoplasm. It carries out the reaction IMP + diphosphate = hypoxanthine + 5-phospho-alpha-D-ribose 1-diphosphate. The enzyme catalyses GMP + diphosphate = guanine + 5-phospho-alpha-D-ribose 1-diphosphate. It participates in purine metabolism; IMP biosynthesis via salvage pathway; IMP from hypoxanthine: step 1/1. Its function is as follows. Converts guanine to guanosine monophosphate, and hypoxanthine to inosine monophosphate. Transfers the 5-phosphoribosyl group from 5-phosphoribosylpyrophosphate onto the purine. Plays a central role in the generation of purine nucleotides through the purine salvage pathway. The protein is Hypoxanthine-guanine phosphoribosyltransferase (HPRT1) of Homo sapiens (Human).